The primary structure comprises 288 residues: Proteasome assembly chaperone 1 (288 aa).

The interval 1 to 33 (MATFFGEVQSVFSRAVDEEEEDEDDDEEEEEDR) is disordered. Residues 17-33 (DEEEEDEDDDEEEEEDR) are compositionally biased toward acidic residues.

Belongs to the PSMG1 family. As to quaternary structure, forms a heterodimer with psmg2. Post-translationally, degraded by the proteasome upon completion of 20S proteasome maturation.

It is found in the cytoplasm. The protein resides in the endoplasmic reticulum. In terms of biological role, chaperone protein which promotes assembly of the 20S proteasome as part of a heterodimer with psmg2. The polypeptide is Proteasome assembly chaperone 1 (Xenopus laevis (African clawed frog)).